The chain runs to 153 residues: 6,7-dimethyl-8-ribityllumazine synthase (153 aa).

5-amino-6-(D-ribitylamino)uracil-binding positions include phenylalanine 22, 56-58 (AFE), and 80-82 (TVI). 85–86 (AT) contacts (2S)-2-hydroxy-3-oxobutyl phosphate. Residue histidine 88 is the Proton donor of the active site. Phenylalanine 113 serves as a coordination point for 5-amino-6-(D-ribitylamino)uracil. Position 127 (arginine 127) interacts with (2S)-2-hydroxy-3-oxobutyl phosphate.

Belongs to the DMRL synthase family.

It catalyses the reaction (2S)-2-hydroxy-3-oxobutyl phosphate + 5-amino-6-(D-ribitylamino)uracil = 6,7-dimethyl-8-(1-D-ribityl)lumazine + phosphate + 2 H2O + H(+). It participates in cofactor biosynthesis; riboflavin biosynthesis; riboflavin from 2-hydroxy-3-oxobutyl phosphate and 5-amino-6-(D-ribitylamino)uracil: step 1/2. Its function is as follows. Catalyzes the formation of 6,7-dimethyl-8-ribityllumazine by condensation of 5-amino-6-(D-ribitylamino)uracil with 3,4-dihydroxy-2-butanone 4-phosphate. This is the penultimate step in the biosynthesis of riboflavin. The sequence is that of 6,7-dimethyl-8-ribityllumazine synthase from Clostridium perfringens (strain ATCC 13124 / DSM 756 / JCM 1290 / NCIMB 6125 / NCTC 8237 / Type A).